Here is a 500-residue protein sequence, read N- to C-terminus: Probable cation transporter HKT1;4 (500 aa).

Residues 1–12 (MPTSRRALAGGA) are Cytoplasmic-facing. 2 helical membrane-spanning segments follow: residues 13–33 (LSMH…LLGV) and 74–94 (LVVL…LVGL). Topologically, residues 95 to 156 (ASKWSKLRSD…ADTLRHNAVR (62 aa)) are cytoplasmic. The interval 121 to 145 (ADIDGGDVENPTSSGEEAASRRRPM) is disordered. The next 2 membrane-spanning stretches (helical) occupy residues 157–177 (ALFY…AVAV) and 239–259 (VLAG…AAAA). Topologically, residues 260–290 (ATRREELVEMAREGGRAAAAGYAHLMPARRC) are cytoplasmic. 2 helical membrane-spanning segments follow: residues 291-311 (WMLA…VCGM) and 346-366 (LSIL…LPPY). Residues 367–390 (TTWFPFEENSTTKDSNAENQGIRL) lie on the Cytoplasmic side of the membrane. The next 2 helical transmembrane spans lie at 391–411 (LEST…AICI) and 464–484 (GFVG…MFFG). The Cytoplasmic segment spans residues 485 to 500 (RLKKFSMKGGKAWKLS).

It belongs to the TrkH potassium transport family. HKT (TC 2.A.38.3) subfamily.

The protein localises to the membrane. In terms of biological role, probable cation transporter. May be involved in regulation of potassium-sodium homeostasis. The sequence is that of Probable cation transporter HKT1;4 from Oryza sativa subsp. japonica (Rice).